The primary structure comprises 181 residues: MSANENNLIWIDLEMTGLDPERDRIIEIATLVTDANLNILAEGPTIAVHQSDAQLALMDEWNVRTHTGSGLVDRVKASTVSEHDAELATIDFLKQWVPAGKSPICGNSIGQDRRFLFKYMPQLEAYFHYRYLDVSTLKELARRWKPEILDGFKKQGTHQAMDDIRESVAELAYYREHFIKL.

Residues 8 to 171 form the Exonuclease domain; sequence LIWIDLEMTG…DDIRESVAEL (164 aa). Residue tyrosine 129 is part of the active site.

The protein belongs to the oligoribonuclease family.

It is found in the cytoplasm. Functionally, 3'-to-5' exoribonuclease specific for small oligoribonucleotides. This Klebsiella pneumoniae subsp. pneumoniae (strain ATCC 700721 / MGH 78578) protein is Oligoribonuclease.